The sequence spans 119 residues: V-type proton ATPase subunit F (119 aa).

It belongs to the V-ATPase F subunit family. In terms of assembly, V-ATPase is a heteromultimeric enzyme made up of two complexes: the ATP-hydrolytic V1 complex and the proton translocation V0 complex. The V1 complex consists of three catalytic AB heterodimers that form a heterohexamer, three peripheral stalks each consisting of EG heterodimers, one central rotor including subunits D and F, and the regulatory subunits C and H. The proton translocation complex V0 consists of the proton transport subunit a, a ring of proteolipid subunits c9c'', rotary subunit d, subunits e and f, and the accessory subunits ATP6AP1/Ac45 and ATP6AP2/PRR. Expressed in brain (at protein level).

The protein localises to the cytoplasmic vesicle. It localises to the secretory vesicle. The protein resides in the synaptic vesicle membrane. It is found in the clathrin-coated vesicle membrane. Functionally, subunit of the V1 complex of vacuolar(H+)-ATPase (V-ATPase), a multisubunit enzyme composed of a peripheral complex (V1) that hydrolyzes ATP and a membrane integral complex (V0) that translocates protons. V-ATPase is responsible for acidifying and maintaining the pH of intracellular compartments and in some cell types, is targeted to the plasma membrane, where it is responsible for acidifying the extracellular environment. This Bos taurus (Bovine) protein is V-type proton ATPase subunit F (ATP6V1F).